The primary structure comprises 364 residues: Chaperone protein DnaJ 1 (364 aa).

The J domain maps to 7-71 (DYYEILGVNR…ERRSEYDAIL (65 aa)). Residues 124–200 (GCEKEIIYSR…CYGRGRVSAQ (77 aa)) form a CR-type zinc finger. Zn(2+)-binding residues include Cys137, Cys140, Cys154, Cys157, Cys174, Cys177, Cys188, and Cys191. CXXCXGXG motif repeat units follow at residues 137 to 144 (CPVCEGMG), 154 to 161 (CHACNGEG), 174 to 181 (CSVCKGKG), and 188 to 195 (CPTCYGRG).

The protein belongs to the DnaJ family. As to quaternary structure, homodimer. The cofactor is Zn(2+).

It is found in the cytoplasm. In terms of biological role, participates actively in the response to hyperosmotic and heat shock by preventing the aggregation of stress-denatured proteins and by disaggregating proteins, also in an autonomous, DnaK-independent fashion. Unfolded proteins bind initially to DnaJ; upon interaction with the DnaJ-bound protein, DnaK hydrolyzes its bound ATP, resulting in the formation of a stable complex. GrpE releases ADP from DnaK; ATP binding to DnaK triggers the release of the substrate protein, thus completing the reaction cycle. Several rounds of ATP-dependent interactions between DnaJ, DnaK and GrpE are required for fully efficient folding. Also involved, together with DnaK and GrpE, in the DNA replication of plasmids through activation of initiation proteins. The chain is Chaperone protein DnaJ 1 from Aquifex aeolicus (strain VF5).